A 239-amino-acid chain; its full sequence is Uridylate kinase (239 aa).

Residue 12–15 (KLSG) coordinates ATP. UMP is bound at residue glycine 53. Residues glycine 54 and arginine 58 each coordinate ATP. UMP contacts are provided by residues aspartate 73 and 135-142 (TGSPCFTT). Residues threonine 162, tyrosine 168, and aspartate 171 each coordinate ATP.

It belongs to the UMP kinase family. In terms of assembly, homohexamer.

It is found in the cytoplasm. The catalysed reaction is UMP + ATP = UDP + ADP. The protein operates within pyrimidine metabolism; CTP biosynthesis via de novo pathway; UDP from UMP (UMPK route): step 1/1. With respect to regulation, inhibited by UTP. Functionally, catalyzes the reversible phosphorylation of UMP to UDP. The chain is Uridylate kinase from Ruthia magnifica subsp. Calyptogena magnifica.